A 417-amino-acid chain; its full sequence is Serine hydroxymethyltransferase (417 aa).

(6S)-5,6,7,8-tetrahydrofolate-binding positions include Leu-116 and 120 to 122 (GHL). The residue at position 225 (Lys-225) is an N6-(pyridoxal phosphate)lysine. 350-352 (SPF) contacts (6S)-5,6,7,8-tetrahydrofolate.

Belongs to the SHMT family. Homodimer. Requires pyridoxal 5'-phosphate as cofactor.

It localises to the cytoplasm. It catalyses the reaction (6R)-5,10-methylene-5,6,7,8-tetrahydrofolate + glycine + H2O = (6S)-5,6,7,8-tetrahydrofolate + L-serine. Its pathway is one-carbon metabolism; tetrahydrofolate interconversion. The protein operates within amino-acid biosynthesis; glycine biosynthesis; glycine from L-serine: step 1/1. Its function is as follows. Catalyzes the reversible interconversion of serine and glycine with tetrahydrofolate (THF) serving as the one-carbon carrier. This reaction serves as the major source of one-carbon groups required for the biosynthesis of purines, thymidylate, methionine, and other important biomolecules. Also exhibits THF-independent aldolase activity toward beta-hydroxyamino acids, producing glycine and aldehydes, via a retro-aldol mechanism. This Ligilactobacillus salivarius (strain UCC118) (Lactobacillus salivarius) protein is Serine hydroxymethyltransferase.